The following is a 521-amino-acid chain: 2,3-bisphosphoglycerate-independent phosphoglycerate mutase 2 (521 aa).

Mn(2+) contacts are provided by aspartate 20 and serine 70. Serine 70 (phosphoserine intermediate) is an active-site residue. Residues histidine 131, 161–162 (RD), arginine 193, arginine 199, 270–273 (RPDR), and lysine 343 each bind substrate. Mn(2+) is bound by residues aspartate 410, histidine 414, aspartate 451, histidine 452, and histidine 470.

This sequence belongs to the BPG-independent phosphoglycerate mutase family. It depends on Mn(2+) as a cofactor.

It carries out the reaction (2R)-2-phosphoglycerate = (2R)-3-phosphoglycerate. The protein operates within carbohydrate degradation; glycolysis; pyruvate from D-glyceraldehyde 3-phosphate: step 3/5. In terms of biological role, catalyzes the interconversion of 2-phosphoglycerate and 3-phosphoglycerate. The chain is 2,3-bisphosphoglycerate-independent phosphoglycerate mutase 2 from Methanosarcina acetivorans (strain ATCC 35395 / DSM 2834 / JCM 12185 / C2A).